A 280-amino-acid chain; its full sequence is Pantothenate synthetase (280 aa).

30–37 (MGYLHEGH) contacts ATP. Histidine 37 serves as the catalytic Proton donor. Glutamine 61 serves as a coordination point for (R)-pantoate. Beta-alanine is bound at residue glutamine 61. Residue 147–150 (GQKD) coordinates ATP. Residue glutamine 153 coordinates (R)-pantoate. ATP is bound by residues valine 176 and 184 to 187 (MSSR).

The protein belongs to the pantothenate synthetase family. Homodimer.

The protein resides in the cytoplasm. The enzyme catalyses (R)-pantoate + beta-alanine + ATP = (R)-pantothenate + AMP + diphosphate + H(+). The protein operates within cofactor biosynthesis; (R)-pantothenate biosynthesis; (R)-pantothenate from (R)-pantoate and beta-alanine: step 1/1. Its function is as follows. Catalyzes the condensation of pantoate with beta-alanine in an ATP-dependent reaction via a pantoyl-adenylate intermediate. The sequence is that of Pantothenate synthetase from Thermosipho melanesiensis (strain DSM 12029 / CIP 104789 / BI429).